A 645-amino-acid polypeptide reads, in one-letter code: Transcription termination factor FttA (645 aa).

The KHa stretch occupies residues 10 to 77 (APSNQNIMAT…IIVRIDESVR (68 aa)). The interval 78 to 146 (KKEEDARKML…WTLRIRKATT (69 aa)) is KHb. Residues 187–391 (EISLTALGGF…LLIESTYGAK (205 aa)) are metallo-beta-lactamase N-terminus. Zn(2+) is bound by residues H250, H252, D254, H255, H337, and D360. Residues 392-586 (EDIQPTRQEV…CRMEKLDGFS (195 aa)) form a beta-Casp region. Positions 587–645 (GHSDYNQLTGFVQKLRPKLRRVLVNHGERRKSENLALAVRRMFRIPAHYPQIQESIKLF) are metallo-beta-lactamase C-terminus. H612 is a binding site for Zn(2+).

The protein belongs to the metallo-beta-lactamase superfamily. RNA-metabolizing metallo-beta-lactamase-like family. FttA subfamily. As to quaternary structure, homodimer. Interacts with RNA polymerase (RNAP), interacts with the Spt4-Spt5 complex. Zn(2+) serves as cofactor.

Terminates transcription on the whole genome. Termination is linked to FttA-mediated RNA cleavage and does not require NTP hydrolysis. Cleaves endonucleolytically at the RNA exit channel of RNA polymerase (RNAP); the 5'-3' exonuclease activity of this protein degrades the nascent RNA released from RNAP. Functionally, terminates transcription genome-wide in M.maripaludis. Restores wild-type growth to a strain of Methanococcus maripaludis depleted for this gene at 22 degrees Celsius and prevents transcriptional read-through. Transcription termination is most effective in vivo on RNAs with more than one U4-tract in their 3'-ends. Has endonuclease activity after U-rich tracts in transcription termination sequences. The sequence is that of Transcription termination factor FttA from Cenarchaeum symbiosum (strain A).